A 505-amino-acid chain; its full sequence is Methylmalonyl-CoA carboxyltransferase 5S subunit (505 aa).

Positions 14-276 (VGITELVLRD…TTNLDYDRLH (263 aa)) constitute a Pyruvate carboxyltransferase domain. Residues 22 to 26 (RDAHQ), Ala59, and Lys184 contribute to the substrate site. Asp23 serves as a coordination point for Co(2+). Positions 184, 215, and 217 each coordinate Co(2+). An N6-carboxylysine; partial modification is found at Lys184.

Homodimer. Transcarboxylase is composed of three subunits: 1.3S, 5S, and 12S. The core of the enzyme is composed of six 12S subunits. On each side of the core there are three pairs of 5S subunits. Each 5S dimer is attached to the core by two 1.3S subunits. Thus the total number of chains is 30 (6 + 12 + 12). The cofactor is Co(2+). Lys-184 is carboxylated in the free enzyme and helps to coordinate the cobalt ion. Lys-184 is partially carboxylated in the complex with pyruvate, but is not carboxylated in the oxaloacetate-bound form.

The enzyme catalyses (S)-methylmalonyl-CoA + pyruvate = propanoyl-CoA + oxaloacetate. The 5S subunit specifically catalyzes the transfer of the carboxyl group from biotin of the 1.3S subunit to pyruvate to form oxaloacetate and 1.3S biotin. This Propionibacterium freudenreichii subsp. shermanii protein is Methylmalonyl-CoA carboxyltransferase 5S subunit.